The chain runs to 274 residues: 3-methyl-2-oxobutanoate hydroxymethyltransferase (274 aa).

Asp50 and Asp89 together coordinate Mg(2+). 3-methyl-2-oxobutanoate contacts are provided by residues 50–51, Asp89, and Lys119; that span reads DS. Glu121 is a Mg(2+) binding site. The Proton acceptor role is filled by Glu188.

This sequence belongs to the PanB family. Homodecamer; pentamer of dimers. Mg(2+) serves as cofactor.

The protein resides in the cytoplasm. The enzyme catalyses 3-methyl-2-oxobutanoate + (6R)-5,10-methylene-5,6,7,8-tetrahydrofolate + H2O = 2-dehydropantoate + (6S)-5,6,7,8-tetrahydrofolate. It participates in cofactor biosynthesis; (R)-pantothenate biosynthesis; (R)-pantoate from 3-methyl-2-oxobutanoate: step 1/2. Its function is as follows. Catalyzes the reversible reaction in which hydroxymethyl group from 5,10-methylenetetrahydrofolate is transferred onto alpha-ketoisovalerate to form ketopantoate. In Methylorubrum populi (strain ATCC BAA-705 / NCIMB 13946 / BJ001) (Methylobacterium populi), this protein is 3-methyl-2-oxobutanoate hydroxymethyltransferase.